A 128-amino-acid polypeptide reads, in one-letter code: MEQYYGTGRRKEAVARVFLRPGNGKVTVNGQDFNEYFQGLVRAVAALEPLRAVDALGHFDAYITVRGGGKSGQIDAIKLGIARALVQYNPDYRAKLKPLGFLTRDARVVERKKYGKHKARRAPQYSKR.

Part of the 30S ribosomal subunit. Contacts proteins S7 and S10.

Part of the top of the head of the 30S subunit. The C-terminal region penetrates the head emerging in the P-site where it contacts tRNA. This Thermus thermophilus (strain ATCC 27634 / DSM 579 / HB8) protein is Small ribosomal subunit protein uS9 (rpsI).